A 333-amino-acid polypeptide reads, in one-letter code: Glycerol-3-phosphate dehydrogenase [NAD(P)+] (333 aa).

NADPH is bound by residues W11, R30, and K105. The sn-glycerol 3-phosphate site is built by K105, G133, and S135. Residue A137 participates in NADPH binding. Sn-glycerol 3-phosphate is bound by residues K188, D241, S251, R252, and N253. K188 acts as the Proton acceptor in catalysis. Residue R252 coordinates NADPH. NADPH-binding residues include V276 and E278.

Belongs to the NAD-dependent glycerol-3-phosphate dehydrogenase family.

The protein localises to the cytoplasm. The enzyme catalyses sn-glycerol 3-phosphate + NAD(+) = dihydroxyacetone phosphate + NADH + H(+). It carries out the reaction sn-glycerol 3-phosphate + NADP(+) = dihydroxyacetone phosphate + NADPH + H(+). Its pathway is membrane lipid metabolism; glycerophospholipid metabolism. In terms of biological role, catalyzes the reduction of the glycolytic intermediate dihydroxyacetone phosphate (DHAP) to sn-glycerol 3-phosphate (G3P), the key precursor for phospholipid synthesis. The protein is Glycerol-3-phosphate dehydrogenase [NAD(P)+] of Methylibium petroleiphilum (strain ATCC BAA-1232 / LMG 22953 / PM1).